The chain runs to 196 residues: uncharacterized protein (196 aa).

The chain crosses the membrane as a helical span at residues 20 to 40; the sequence is GALALGCIALLLMGIVGCTTV.

It localises to the membrane. This is an uncharacterized protein from Mycobacterium tuberculosis (strain CDC 1551 / Oshkosh).